Consider the following 203-residue polypeptide: Holliday junction branch migration complex subunit RuvA (203 aa).

Positions 1-63 are domain I; the sequence is MIGKLSGKID…EEHIHLYGFL (63 aa). The interval 64-142 is domain II; the sequence is TLEEKNFFNL…KISSGSVIIK (79 aa). The interval 143–149 is flexible linker; that stretch reads DSLNIKN. The segment at 150 to 203 is domain III; that stretch reads ITPVASNEVIKALVNLGFSRFEAQNAVQGIIIQNPEISIDELIKTALKNRNAGL.

The protein belongs to the RuvA family. Homotetramer. Forms an RuvA(8)-RuvB(12)-Holliday junction (HJ) complex. HJ DNA is sandwiched between 2 RuvA tetramers; dsDNA enters through RuvA and exits via RuvB. An RuvB hexamer assembles on each DNA strand where it exits the tetramer. Each RuvB hexamer is contacted by two RuvA subunits (via domain III) on 2 adjacent RuvB subunits; this complex drives branch migration. In the full resolvosome a probable DNA-RuvA(4)-RuvB(12)-RuvC(2) complex forms which resolves the HJ.

Its subcellular location is the cytoplasm. Functionally, the RuvA-RuvB-RuvC complex processes Holliday junction (HJ) DNA during genetic recombination and DNA repair, while the RuvA-RuvB complex plays an important role in the rescue of blocked DNA replication forks via replication fork reversal (RFR). RuvA specifically binds to HJ cruciform DNA, conferring on it an open structure. The RuvB hexamer acts as an ATP-dependent pump, pulling dsDNA into and through the RuvAB complex. HJ branch migration allows RuvC to scan DNA until it finds its consensus sequence, where it cleaves and resolves the cruciform DNA. The sequence is that of Holliday junction branch migration complex subunit RuvA from Rickettsia felis (strain ATCC VR-1525 / URRWXCal2) (Rickettsia azadi).